Here is a 185-residue protein sequence, read N- to C-terminus: Ribosome-recycling factor (185 aa).

The protein belongs to the RRF family.

It is found in the cytoplasm. Functionally, responsible for the release of ribosomes from messenger RNA at the termination of protein biosynthesis. May increase the efficiency of translation by recycling ribosomes from one round of translation to another. In Streptococcus agalactiae serotype V (strain ATCC BAA-611 / 2603 V/R), this protein is Ribosome-recycling factor.